The chain runs to 335 residues: Nucleoid-associated protein Ent638_2782 (335 aa).

Belongs to the YejK family.

It localises to the cytoplasm. It is found in the nucleoid. This is Nucleoid-associated protein Ent638_2782 from Enterobacter sp. (strain 638).